Consider the following 227-residue polypeptide: Cytochrome c oxidase subunit 2 (227 aa).

At 1–14 the chain is on the mitochondrial intermembrane side; the sequence is MAYPFQLGLQDATS. A helical transmembrane segment spans residues 15 to 45; sequence PIMEELTNFHDHTLMIVFLISSLVLYIISLM. The Mitochondrial matrix portion of the chain corresponds to 46-59; that stretch reads LTTKLTHTSTMDAQ. The chain crosses the membrane as a helical span at residues 60–87; it reads EVETIWTILPAAILVLIALPSLRILYMM. Topologically, residues 88–227 are mitochondrial intermembrane; the sequence is DEINNPVLTV…YFESWSASMI (140 aa). Cu cation contacts are provided by histidine 161, cysteine 196, glutamate 198, cysteine 200, histidine 204, and methionine 207. Residue glutamate 198 participates in Mg(2+) binding. Phosphotyrosine is present on tyrosine 218.

This sequence belongs to the cytochrome c oxidase subunit 2 family. Component of the cytochrome c oxidase (complex IV, CIV), a multisubunit enzyme composed of 14 subunits. The complex is composed of a catalytic core of 3 subunits MT-CO1, MT-CO2 and MT-CO3, encoded in the mitochondrial DNA, and 11 supernumerary subunits COX4I, COX5A, COX5B, COX6A, COX6B, COX6C, COX7A, COX7B, COX7C, COX8 and NDUFA4, which are encoded in the nuclear genome. The complex exists as a monomer or a dimer and forms supercomplexes (SCs) in the inner mitochondrial membrane with NADH-ubiquinone oxidoreductase (complex I, CI) and ubiquinol-cytochrome c oxidoreductase (cytochrome b-c1 complex, complex III, CIII), resulting in different assemblies (supercomplex SCI(1)III(2)IV(1) and megacomplex MCI(2)III(2)IV(2)). Found in a complex with TMEM177, COA6, COX18, COX20, SCO1 and SCO2. Interacts with TMEM177 in a COX20-dependent manner. Interacts with COX20. Interacts with COX16. Cu cation is required as a cofactor.

The protein resides in the mitochondrion inner membrane. The enzyme catalyses 4 Fe(II)-[cytochrome c] + O2 + 8 H(+)(in) = 4 Fe(III)-[cytochrome c] + 2 H2O + 4 H(+)(out). Functionally, component of the cytochrome c oxidase, the last enzyme in the mitochondrial electron transport chain which drives oxidative phosphorylation. The respiratory chain contains 3 multisubunit complexes succinate dehydrogenase (complex II, CII), ubiquinol-cytochrome c oxidoreductase (cytochrome b-c1 complex, complex III, CIII) and cytochrome c oxidase (complex IV, CIV), that cooperate to transfer electrons derived from NADH and succinate to molecular oxygen, creating an electrochemical gradient over the inner membrane that drives transmembrane transport and the ATP synthase. Cytochrome c oxidase is the component of the respiratory chain that catalyzes the reduction of oxygen to water. Electrons originating from reduced cytochrome c in the intermembrane space (IMS) are transferred via the dinuclear copper A center (CU(A)) of subunit 2 and heme A of subunit 1 to the active site in subunit 1, a binuclear center (BNC) formed by heme A3 and copper B (CU(B)). The BNC reduces molecular oxygen to 2 water molecules using 4 electrons from cytochrome c in the IMS and 4 protons from the mitochondrial matrix. This Conilurus penicillatus (Brush-tailed rabbit-rat) protein is Cytochrome c oxidase subunit 2 (MT-CO2).